A 443-amino-acid polypeptide reads, in one-letter code: Ribulose bisphosphate carboxylase large chain (443 aa).

Lys-7 carries the post-translational modification N6,N6,N6-trimethyllysine. Substrate-binding residues include Asn-116 and Thr-166. The active-site Proton acceptor is the Lys-168. Substrate is bound at residue Lys-170. Positions 194, 196, and 197 each coordinate Mg(2+). Lys-194 is subject to N6-carboxylysine. The Proton acceptor role is filled by His-287. Residues Arg-288, His-320, and Ser-372 each contribute to the substrate site.

The protein belongs to the RuBisCO large chain family. Type I subfamily. As to quaternary structure, heterohexadecamer of 8 large chains and 8 small chains; disulfide-linked. The disulfide link is formed within the large subunit homodimers. Mg(2+) is required as a cofactor. Post-translationally, the disulfide bond which can form in the large chain dimeric partners within the hexadecamer appears to be associated with oxidative stress and protein turnover.

It localises to the plastid. It is found in the chloroplast. The enzyme catalyses 2 (2R)-3-phosphoglycerate + 2 H(+) = D-ribulose 1,5-bisphosphate + CO2 + H2O. The catalysed reaction is D-ribulose 1,5-bisphosphate + O2 = 2-phosphoglycolate + (2R)-3-phosphoglycerate + 2 H(+). RuBisCO catalyzes two reactions: the carboxylation of D-ribulose 1,5-bisphosphate, the primary event in carbon dioxide fixation, as well as the oxidative fragmentation of the pentose substrate in the photorespiration process. Both reactions occur simultaneously and in competition at the same active site. The protein is Ribulose bisphosphate carboxylase large chain of Abies homolepis (Nikko fir).